The sequence spans 557 residues: MPSDIEIARAATLKPIAQVAERIGIPDEALHNYGKHIAKIDHGFIKSLEGKPEGKLVLVTAISPTPAGEGKTTTTVGLGDALNRIGQRAVMCLREPSLGPCFGMKGGAAGGGKAQVVPMEQINLHFTGDFHAITSAHSLAAALIDNHVYWANELNIDVRRIHWRRVVDMNDRALRAINQSLGGVANGFPREDGFDITVASEVMAVFCLARDLADLEERLGRIVIAETRDRKPVTLADVKATGAMTVLLKDALQPNLVQTLEGNPALIHGGPFANIAHGCNSVIATQTGLRLADYVVTEAGFGADLGAEKFIDIKCRQTGLKPSAVVIVATVRALKMHGGVNKKDLQGENLDALEKGFANLERHVKNVRGFGLPVVVGVNHFFQDTDAEHAKLKELCRDRLQVEAITCKHWAEGGAGAEELAQAVVKLAEGEQKPLTFAYDTETKLTDKIKAIATKLYGAADIQIESKAATKLAGFEKDGYGHLPICMAKTQYSFSTDPTLMGAPSGHLVSVRDVRLSAGAGFVVAICGEIMTMPGLPKVPAADTIRLDANGQIDGLF.

Threonine 65–threonine 72 provides a ligand contact to ATP.

Belongs to the formate--tetrahydrofolate ligase family.

It carries out the reaction (6S)-5,6,7,8-tetrahydrofolate + formate + ATP = (6R)-10-formyltetrahydrofolate + ADP + phosphate. The protein operates within one-carbon metabolism; tetrahydrofolate interconversion. The protein is Formate--tetrahydrofolate ligase of Methylorubrum populi (strain ATCC BAA-705 / NCIMB 13946 / BJ001) (Methylobacterium populi).